We begin with the raw amino-acid sequence, 183 residues long: Acireductone dioxygenase (183 aa).

The interval 1–21 is disordered; it reads MVQAWYMDSDTTTDQREEHQL. 4 residues coordinate Fe(2+): His-90, His-92, Glu-96, and His-135. Residues His-90, His-92, Glu-96, and His-135 each contribute to the Ni(2+) site.

Belongs to the acireductone dioxygenase (ARD) family. The cofactor is Fe(2+). Ni(2+) serves as cofactor.

It is found in the cytoplasm. The protein localises to the nucleus. It catalyses the reaction 1,2-dihydroxy-5-(methylsulfanyl)pent-1-en-3-one + O2 = 4-methylsulfanyl-2-oxobutanoate + formate + 2 H(+). The catalysed reaction is 1,2-dihydroxy-5-(methylsulfanyl)pent-1-en-3-one + O2 = 3-(methylsulfanyl)propanoate + CO + formate + 2 H(+). Its pathway is amino-acid biosynthesis; L-methionine biosynthesis via salvage pathway; L-methionine from S-methyl-5-thio-alpha-D-ribose 1-phosphate: step 5/6. Its function is as follows. Catalyzes 2 different reactions between oxygen and the acireductone 1,2-dihydroxy-3-keto-5-methylthiopentene (DHK-MTPene) depending upon the metal bound in the active site. Fe-containing acireductone dioxygenase (Fe-ARD) produces formate and 2-keto-4-methylthiobutyrate (KMTB), the alpha-ketoacid precursor of methionine in the methionine recycle pathway. Ni-containing acireductone dioxygenase (Ni-ARD) produces methylthiopropionate, carbon monoxide and formate, and does not lie on the methionine recycle pathway. This is Acireductone dioxygenase from Ixodes scapularis (Black-legged tick).